Consider the following 237-residue polypeptide: Phosphoribosylaminoimidazole-succinocarboxamide synthase (237 aa).

This sequence belongs to the SAICAR synthetase family.

The enzyme catalyses 5-amino-1-(5-phospho-D-ribosyl)imidazole-4-carboxylate + L-aspartate + ATP = (2S)-2-[5-amino-1-(5-phospho-beta-D-ribosyl)imidazole-4-carboxamido]succinate + ADP + phosphate + 2 H(+). It functions in the pathway purine metabolism; IMP biosynthesis via de novo pathway; 5-amino-1-(5-phospho-D-ribosyl)imidazole-4-carboxamide from 5-amino-1-(5-phospho-D-ribosyl)imidazole-4-carboxylate: step 1/2. The polypeptide is Phosphoribosylaminoimidazole-succinocarboxamide synthase (Psychrobacter arcticus (strain DSM 17307 / VKM B-2377 / 273-4)).